The chain runs to 582 residues: Formate--tetrahydrofolate ligase (582 aa).

65–72 provides a ligand contact to ATP; it reads TPLGEGKT.

The protein belongs to the formate--tetrahydrofolate ligase family.

The catalysed reaction is (6S)-5,6,7,8-tetrahydrofolate + formate + ATP = (6R)-10-formyltetrahydrofolate + ADP + phosphate. The protein operates within one-carbon metabolism; tetrahydrofolate interconversion. This Vibrio parahaemolyticus serotype O3:K6 (strain RIMD 2210633) protein is Formate--tetrahydrofolate ligase.